The chain runs to 3644 residues: Msx2-interacting protein (3644 aa).

Residues Met1–Lys574 mediate DNA binding. The RRM 1 domain occupies Arg6–Pro81. Ser99 is subject to Phosphoserine. 3 disordered regions span residues Glu103–Ala124, Tyr170–Phe209, and Thr225–Glu331. Arg108 carries the omega-N-methylarginine modification. Ser188 and Ser190 each carry phosphoserine. Composition is skewed to basic and acidic residues over residues Asn192 to Glu207 and Thr225 to Tyr237. A compositionally biased stretch (low complexity) spans Pro245–Ser310. At Ser310 the chain carries Phosphoserine. RRM domains follow at residues Phe336–Glu416, Arg439–Ser514, and Asn518–Arg590. Positions Leu559 to Gly575 form a coiled coil. 2 disordered regions span residues Ser625 to Asp673 and Ile716 to Phe1413. Composition is skewed to basic and acidic residues over residues Lys639–Tyr656 and Ile716–Glu745. Residue Ser647 is modified to Phosphoserine. Ser747, Ser749, Ser758, and Ser762 each carry phosphoserine. Residues His765 to Glu783 are compositionally biased toward basic and acidic residues. Positions Arg784–Pro794 are enriched in low complexity. At Ser792 the chain carries Phosphoserine. Positions Arg795–Glu842 are enriched in basic and acidic residues. Residues Glu822–Ala850 adopt a coiled-coil conformation. Phosphoserine occurs at positions 852, 855, and 869. Composition is skewed to basic and acidic residues over residues Glu863 to Leu894, Arg904 to Thr930, Ala947 to Thr975, and Leu1009 to Arg1071. Residues Ser1077 and Ser1183 each carry the phosphoserine modification. The segment covering Gly1138–Gly1227 has biased composition (basic and acidic residues). The stretch at Arg1185 to Lys1206 forms a coiled coil. Phosphoserine occurs at positions 1209, 1237, 1267, 1276, 1283, 1293, 1298, 1302, and 1348. Over residues Asp1246 to Arg1272 the composition is skewed to basic and acidic residues. Over residues Ser1283–Gly1292 the composition is skewed to basic and acidic residues. Positions Glu1351–Arg1365 are enriched in basic and acidic residues. Ser1395 and Ser1397 each carry phosphoserine. 2 positions are modified to phosphothreonine: Thr1454 and Thr1456. 2 disordered regions span residues Asp1494–Gln1538 and Arg1557–Lys2447. A coiled-coil region spans residues Tyr1509–Arg1544. Composition is skewed to basic and acidic residues over residues Arg1516–Gln1538 and Arg1557–Glu1567. Positions Glu1582–Val1591 are enriched in polar residues. Positions Arg1601–Pro1646 are enriched in basic and acidic residues. Positions Arg1607–Glu1627 form a coiled coil. Thr1634 bears the Phosphothreonine mark. Over residues Val1701–Glu1710 the composition is skewed to low complexity. The span at Pro1756–Ser1765 shows a compositional bias: polar residues. Basic and acidic residues predominate over residues Gln1782–Asp1796. Positions Thr1797–Gly1810 are enriched in polar residues. Residue Thr1844 is modified to Phosphothreonine. 2 stretches are compositionally biased toward basic and acidic residues: residues Pro1857 to Lys1871 and Glu1879 to Thr1894. A phosphoserine mark is found at Ser1915 and Ser1936. The segment covering Thr1930–Glu1943 has biased composition (basic and acidic residues). A Phosphothreonine modification is found at Thr1965. A compositionally biased stretch (basic residues) spans Arg1967–Arg1976. Basic and acidic residues-rich tracts occupy residues Arg1977 to Glu1991, Gly2039 to Gly2066, Val2074 to Tyr2084, and Gly2097 to Ser2106. Residues Ser2128 and Ser2134 each carry the phosphoserine modification. The span at Pro2129–Asn2147 shows a compositional bias: polar residues. Residues Gly2138 to Asp2462 form an interaction with MSX2 region. Phosphothreonine is present on Thr2171. Low complexity-rich tracts occupy residues Glu2191–Glu2212 and Ala2231–Ser2242. The region spanning Glu2216–Leu2704 is the RID domain. Positions His2261–Glu2274 are enriched in basic and acidic residues. Residues Gly2281–Gln2290 are compositionally biased toward polar residues. Basic and acidic residues predominate over residues Lys2318–Lys2329. Residues Asp2330–Asn2345 show a composition bias toward basic residues. The segment covering Ala2359–Ala2379 has biased composition (low complexity). The residue at position 2366 (Ser2366) is a Phosphoserine. Thr2419 carries the phosphothreonine modification. Residues Ser2450 and Ser2454 each carry the phosphoserine modification. Disordered regions lie at residues Glu2453–Leu2472, Pro2481–Ser2528, Ala2745–Leu2781, and Ser2829–Pro2849. A Phosphothreonine modification is found at Thr2458. Ser2491 bears the Phosphoserine mark. The interval Thr2706 to Gly2845 is interaction with RBPSUH. A phosphothreonine mark is found at Thr2913 and Thr2925. The segment at Asn2974 to Thr3023 is disordered. A compositionally biased stretch (pro residues) spans Pro3003 to Cys3015. Arg3088 and Arg3096 each carry asymmetric dimethylarginine. Positions Arg3310–Gln3473 are disordered. Residues Pro3323 to Gln3340 show a composition bias toward low complexity. The segment covering Gln3366–Val3379 has biased composition (polar residues). Ser3413 is modified (phosphoserine). Residues Met3478–Val3644 enclose the SPOC domain.

This sequence belongs to the RRM Spen family. In terms of assembly, interacts with NCOR2, HDAC1, HDAC2, RBBP4, MBD3 and MTA1L1. Interacts with the nuclear receptors RAR and PPARD. Interacts with RAR in absence of ligand. Binds to the steroid receptor RNA coactivator SRA. Interacts with MSX2. Interacts with RBPSUH; this interaction may prevent the interaction between RBPSUH and NOTCH1. Binds to HIPK3. As to expression, highly expressed in testis. Expressed at lower level in brain, lung, spleen, liver and kidney. Weakly expressed in cardiac and skeletal muscles and ovary. In spleen, it is expressed in follicular B-cells, while it is weakly expressed in marginal zone B-cells.

It is found in the nucleus. In terms of biological role, may serve as a nuclear matrix platform that organizes and integrates transcriptional responses. In osteoblasts, supports transcription activation: synergizes with RUNX2 to enhance FGFR2-mediated activation of the osteocalcin FGF-responsive element (OCFRE). Has also been shown to be an essential corepressor protein, which probably regulates different key pathways, such as the Notch pathway. Negative regulator of the Notch pathway via its interaction with RBPSUH, which prevents the association between NOTCH1 and RBPSUH, and therefore suppresses the transactivation activity of Notch signaling. Blocks the differentiation of precursor B-cells into marginal zone B-cells. Probably represses transcription via the recruitment of large complexes containing histone deacetylase proteins. May bind both to DNA and RNA. The protein is Msx2-interacting protein (Spen) of Mus musculus (Mouse).